A 154-amino-acid polypeptide reads, in one-letter code: UPF0225 protein Asuc_0343 (154 aa).

Belongs to the UPF0225 family.

The protein is UPF0225 protein Asuc_0343 of Actinobacillus succinogenes (strain ATCC 55618 / DSM 22257 / CCUG 43843 / 130Z).